The sequence spans 89 residues: Small ribosomal subunit protein uS14 (89 aa).

This sequence belongs to the universal ribosomal protein uS14 family. Part of the 30S ribosomal subunit. Contacts proteins S3 and S10.

Its function is as follows. Binds 16S rRNA, required for the assembly of 30S particles and may also be responsible for determining the conformation of the 16S rRNA at the A site. The sequence is that of Small ribosomal subunit protein uS14 from Leuconostoc mesenteroides subsp. mesenteroides (strain ATCC 8293 / DSM 20343 / BCRC 11652 / CCM 1803 / JCM 6124 / NCDO 523 / NBRC 100496 / NCIMB 8023 / NCTC 12954 / NRRL B-1118 / 37Y).